Here is a 665-residue protein sequence, read N- to C-terminus: Translation factor GUF1 homolog, mitochondrial (665 aa).

The N-terminal 35 residues, 1–35, are a transit peptide targeting the mitochondrion; that stretch reads MAGAAVLRRSARRIYRHLAAAPAFSRSVLQQPKRL. Positions 34 to 53 are disordered; that stretch reads RLLSSQSSPEHGARGAVSGS. Positions 61-249 constitute a tr-type G domain; the sequence is ERVRNFSIIA…AVIERIPSPP (189 aa). Residues 70–77, 142–146, and 196–199 each bind GTP; these read AHVDHGKS, DTPGH, and NKID.

Belongs to the TRAFAC class translation factor GTPase superfamily. Classic translation factor GTPase family. LepA subfamily.

The protein resides in the mitochondrion inner membrane. The enzyme catalyses GTP + H2O = GDP + phosphate + H(+). In terms of biological role, promotes mitochondrial protein synthesis. May act as a fidelity factor of the translation reaction, by catalyzing a one-codon backward translocation of tRNAs on improperly translocated ribosomes. Binds to mitochondrial ribosomes in a GTP-dependent manner. The protein is Translation factor GUF1 homolog, mitochondrial of Sorghum bicolor (Sorghum).